The chain runs to 439 residues: uncharacterized protein (439 aa).

The YcaO domain occupies 116-439 (GKAASYRAAQ…PMRTPLQEAE (324 aa)).

This is an uncharacterized protein from Mycobacterium tuberculosis (strain CDC 1551 / Oshkosh).